Here is a 410-residue protein sequence, read N- to C-terminus: Peptidase T (410 aa).

A Zn(2+)-binding site is contributed by histidine 79. Residue aspartate 81 is part of the active site. Aspartate 142 serves as a coordination point for Zn(2+). Glutamate 176 (proton acceptor) is an active-site residue. 3 residues coordinate Zn(2+): glutamate 177, aspartate 199, and histidine 381.

Belongs to the peptidase M20B family. Zn(2+) is required as a cofactor.

Its subcellular location is the cytoplasm. The catalysed reaction is Release of the N-terminal residue from a tripeptide.. Its function is as follows. Cleaves the N-terminal amino acid of tripeptides. The protein is Peptidase T of Geobacillus sp. (strain WCH70).